Reading from the N-terminus, the 195-residue chain is Ureidoglycolate lyase (195 aa).

The protein belongs to the ureidoglycolate lyase family. As to quaternary structure, homodimer.

The catalysed reaction is (S)-ureidoglycolate = urea + glyoxylate. It functions in the pathway nitrogen metabolism; (S)-allantoin degradation. In terms of biological role, catalyzes the catabolism of the allantoin degradation intermediate (S)-ureidoglycolate, generating urea and glyoxylate. Involved in the utilization of allantoin as secondary nitrogen source when primary sources are limiting. The chain is Ureidoglycolate lyase (DAL3) from Saccharomyces cerevisiae (strain ATCC 204508 / S288c) (Baker's yeast).